The sequence spans 479 residues: Inhibitory synaptic factor 2A (479 aa).

S177 carries the phosphoserine modification. 2 disordered regions span residues 226-247 (GRAKQDRGRPNSEEPAPPALRR) and 315-338 (SPECSEQPSQTHTPPGLGNQPSPT). Over residues 228–237 (AKQDRGRPNS) the composition is skewed to basic and acidic residues. Polar residues predominate over residues 318–337 (CSEQPSQTHTPPGLGNQPSP). Residues 353-379 (TEVVDLKAQLQMMENLISSSQETIKVL) adopt a coiled-coil conformation. A compositionally biased stretch (polar residues) spans 449 to 461 (SPYSQETYSSTPK). Residues 449–472 (SPYSQETYSSTPKQKSKTESKKHG) form a disordered region.

This sequence belongs to the INSYN2 family. Interacts with GPHN.

It is found in the postsynaptic density. Component of the protein machinery at the inhibitory synapses, probably acting as a scaffold. Inhibitory synapses dampen neuronal activity through postsynaptic hyperpolarization. This synaptic inhibition is fundamental for the functioning of the central nervous system, shaping and orchestrating the flow of information through neuronal networks to generate a precise neural code. The sequence is that of Inhibitory synaptic factor 2A from Homo sapiens (Human).